Reading from the N-terminus, the 217-residue chain is IMPACT family member YvyE (217 aa).

The protein belongs to the IMPACT family.

In Bacillus subtilis (strain 168), this protein is IMPACT family member YvyE (yvyE).